Here is a 192-residue protein sequence, read N- to C-terminus: Putative B3 domain-containing protein At4g03160 (192 aa).

Residues 22–44 form a disordered region; that stretch reads VFFDQEEEEEDEEEEYDEESVCE. Acidic residues predominate over residues 25 to 44; that stretch reads DQEEEEEDEEEEYDEESVCE. The segment at residues 75–173 is a DNA-binding region (TF-B3); it reads KDNQYRLMLG…EICFAIDSTR (99 aa).

It is found in the nucleus. This is Putative B3 domain-containing protein At4g03160 from Arabidopsis thaliana (Mouse-ear cress).